The chain runs to 186 residues: uncharacterized protein (186 aa).

The tract at residues 156–186 (DTKELERTTQPPEHQKHHQEPREKRGMNKRD) is disordered. Basic and acidic residues predominate over residues 173 to 186 (HQEPREKRGMNKRD).

This is an uncharacterized protein from Bacillus subtilis (strain 168).